The following is a 124-amino-acid chain: MPTIQQLIRSERYNTKKKTKSPALKSCPQRRGVCTRVYTTTPKKPNSALRKVARVRLTSGFEVTAYIPGIGHNLQEHSVVMIRGGRVKDLPGVRYHIIRGTLDTAGVKDRRQGRSKYGAKRPKD.

3-methylthioaspartic acid is present on D89. Residues 103 to 124 (DTAGVKDRRQGRSKYGAKRPKD) are disordered. Basic residues predominate over residues 113-124 (GRSKYGAKRPKD).

The protein belongs to the universal ribosomal protein uS12 family. In terms of assembly, part of the 30S ribosomal subunit. Contacts proteins S8 and S17. May interact with IF1 in the 30S initiation complex.

Functionally, with S4 and S5 plays an important role in translational accuracy. In terms of biological role, interacts with and stabilizes bases of the 16S rRNA that are involved in tRNA selection in the A site and with the mRNA backbone. Located at the interface of the 30S and 50S subunits, it traverses the body of the 30S subunit contacting proteins on the other side and probably holding the rRNA structure together. The combined cluster of proteins S8, S12 and S17 appears to hold together the shoulder and platform of the 30S subunit. The chain is Small ribosomal subunit protein uS12 from Acaryochloris marina (strain MBIC 11017).